Reading from the N-terminus, the 268-residue chain is Eukaryotic translation initiation factor 3 subunit J (268 aa).

Disordered stretches follow at residues 1–27 (MSWD…DDEF), 40–63 (DAEE…KVDK), and 217–249 (LAKV…KKDQ). The segment covering 47–58 (QKQKPKAAPKAA) has biased composition (basic residues). A coiled-coil region spans residues 191–221 (IESIRQTVATLNVLIKEKERQERQARLAKVK).

The protein belongs to the eIF-3 subunit J family. In terms of assembly, component of the eukaryotic translation initiation factor 3 (eIF-3) complex.

Its subcellular location is the cytoplasm. Its function is as follows. Component of the eukaryotic translation initiation factor 3 (eIF-3) complex, which is involved in protein synthesis of a specialized repertoire of mRNAs and, together with other initiation factors, stimulates binding of mRNA and methionyl-tRNAi to the 40S ribosome. The eIF-3 complex specifically targets and initiates translation of a subset of mRNAs involved in cell proliferation. This chain is Eukaryotic translation initiation factor 3 subunit J, found in Eremothecium gossypii (strain ATCC 10895 / CBS 109.51 / FGSC 9923 / NRRL Y-1056) (Yeast).